The following is a 443-amino-acid chain: F-box/LRR-repeat protein At2g42720 (443 aa).

The F-box domain occupies 1–47; sequence MDRISSLPDEILEHILSFLSTKEAALTSSLSTRWKNVFVFVPSLHLD. LRR repeat units follow at residues 139-167, 169-194, 201-236, 271-296, 323-348, and 363-389; these read KLRLGRGFTIKLCHENVYLPMLKTLCLDT, DFDGDHNVFETLLPRCPLLEELVLED, CGSVSSPSLKRLRIRFFHIPIISLDVPGLVYLELSC, SSHLVPADMMDLITGIRKVKVLHLTS, DKKQGWQILPLLIKNSPNLETLVFKG, and CSGILGKSSSCLSSSRVKVLEIWSYQG.

The polypeptide is F-box/LRR-repeat protein At2g42720 (Arabidopsis thaliana (Mouse-ear cress)).